We begin with the raw amino-acid sequence, 179 residues long: Large ribosomal subunit protein uL5 (179 aa).

This sequence belongs to the universal ribosomal protein uL5 family. As to quaternary structure, part of the 50S ribosomal subunit; part of the 5S rRNA/L5/L18/L25 subcomplex. Contacts the 5S rRNA and the P site tRNA. Forms a bridge to the 30S subunit in the 70S ribosome.

In terms of biological role, this is one of the proteins that bind and probably mediate the attachment of the 5S RNA into the large ribosomal subunit, where it forms part of the central protuberance. In the 70S ribosome it contacts protein S13 of the 30S subunit (bridge B1b), connecting the 2 subunits; this bridge is implicated in subunit movement. Contacts the P site tRNA; the 5S rRNA and some of its associated proteins might help stabilize positioning of ribosome-bound tRNAs. In Albidiferax ferrireducens (strain ATCC BAA-621 / DSM 15236 / T118) (Rhodoferax ferrireducens), this protein is Large ribosomal subunit protein uL5.